The sequence spans 71 residues: Small ribosomal subunit protein bS21 (71 aa).

It belongs to the bacterial ribosomal protein bS21 family.

The polypeptide is Small ribosomal subunit protein bS21 (Buchnera aphidicola subsp. Acyrthosiphon pisum (strain 5A)).